The primary structure comprises 473 residues: Cysteine--tRNA ligase (473 aa).

Residue Cys-28 participates in Zn(2+) binding. The 'HIGH' region motif lies at 30-40 (PTVYNMPHIGN). Residues Cys-213, His-238, and Glu-242 each contribute to the Zn(2+) site. The 'KMSKS' region signature appears at 270–274 (KMSKS). Position 273 (Lys-273) interacts with ATP.

This sequence belongs to the class-I aminoacyl-tRNA synthetase family. Zn(2+) serves as cofactor.

Its subcellular location is the cytoplasm. It catalyses the reaction tRNA(Cys) + L-cysteine + ATP = L-cysteinyl-tRNA(Cys) + AMP + diphosphate. The sequence is that of Cysteine--tRNA ligase from Methanosarcina mazei (strain ATCC BAA-159 / DSM 3647 / Goe1 / Go1 / JCM 11833 / OCM 88) (Methanosarcina frisia).